The sequence spans 518 residues: GRIN2-like protein (518 aa).

Disordered regions lie at residues 1–23 (MGLE…QSRT) and 467–500 (QTEP…FRTM). Over residues 476–494 (KSDEDPLNKEPSSDKMEKK) the composition is skewed to basic and acidic residues.

As to quaternary structure, may interact with GNAO1.

Functionally, may be involved in neurite outgrowth. The chain is GRIN2-like protein from Gallus gallus (Chicken).